The primary structure comprises 590 residues: Leucine-rich repeat transmembrane neuronal protein 4 (590 aa).

The N-terminal stretch at 1–30 (MGFRLITQLKGMSVLLVLFPTLLLVMLTGA) is a signal peptide. The LRRNT domain occupies 31–59 (QRACPKNCRCDGKIVYCESHAFADIPENI). Topologically, residues 31-424 (QRACPKNCRC…HEYEHVSFHK (394 aa)) are extracellular. The N-linked (GlcNAc...) asparagine glycan is linked to Asn58. LRR repeat units lie at residues 60–83 (SGGSQGLSLRFNSIQKLKSNQFAG), 84–107 (LNQLIWLYLDHNYISSVDEDAFQG), 108–131 (IRRLKELILSSNKITYLHNKTFHP), 132–155 (VPNLRNLDLSYNKLQTLQSEQFKG), 157–179 (RKLIILHLRSNSLKTVPIRVFQD), 180–203 (CRNLDFLDLGYNRLRSLSRNAFAG), 205–227 (LKLKELHLEHNQFSKINFAHFPR), 228–251 (LFNLRSIYLQWNRIRSVSQGLTWT), 252–275 (WSSLHTLDLSGNDIQAIEPGTFKC), and 276–299 (LPNLQKLNLDSNKLTNVSQETVNA). The N-linked (GlcNAc...) asparagine glycan is linked to Asn126. Asn291 carries an N-linked (GlcNAc...) asparagine glycan. The LRRCT domain maps to 311–362 (NMWECSRSICPLFYWLKNFKGNKESTMICAGPKHIQGEKVSDAVETYNICSD). Residues 425 to 445 (IIAGSVALFLSVAMILLVIYV) traverse the membrane as a helical segment. At 446–590 (SWKRYPASMK…PAIYLERITN (145 aa)) the chain is on the cytoplasmic side.

Belongs to the LRRTM family. In terms of assembly, peripherally associated with AMPAR complex. AMPAR complex consists of an inner core made of 4 pore-forming GluA/GRIA proteins (GRIA1, GRIA2, GRIA3 and GRIA4) and 4 major auxiliary subunits arranged in a twofold symmetry. One of the two pairs of distinct binding sites is occupied either by CNIH2, CNIH3 or CACNG2, CACNG3. The other harbors CACNG2, CACNG3, CACNG4, CACNG8 or GSG1L. This inner core of AMPAR complex is complemented by outer core constituents binding directly to the GluA/GRIA proteins at sites distinct from the interaction sites of the inner core constituents. Outer core constituents include at least PRRT1, PRRT2, CKAMP44/SHISA9, FRRS1L and NRN1. The proteins of the inner and outer core serve as a platform for other, more peripherally associated AMPAR constituents, including LRRTM4. Alone or in combination, these auxiliary subunits control the gating and pharmacology of the AMPAR complex and profoundly impact their biogenesis and protein processing. Expressed in the brain (at protein level).

The protein localises to the cell membrane. The protein resides in the postsynaptic cell membrane. In terms of biological role, may play a role in the development and maintenance of the nervous system. Exhibits strong synaptogenic activity, restricted to excitatory presynaptic differentiation. This is Leucine-rich repeat transmembrane neuronal protein 4 (Lrrtm4) from Rattus norvegicus (Rat).